The sequence spans 390 residues: (S)-8-oxocitronellyl enol synthase CYC2 (390 aa).

NADP(+) is bound by residues 35-37 (TGI), 63-64 (RR), 81-82 (DI), 105-106 (TW), and glutamine 143. Active-site residues include lysine 147 and tyrosine 179. Substrate-binding residues include lysine 147 and tyrosine 179. NADP(+) is bound by residues tyrosine 179 and 213–215 (SMM).

It belongs to the short-chain dehydrogenases/reductases (SDR) family. Highly divergent.

The enzyme catalyses (S)-8-oxocitronellyl enol + NADP(+) = (6E)-8-oxogeranial + NADPH + H(+). The catalysed reaction is (S)-8-oxocitronellyl enol + NAD(+) = (6E)-8-oxogeranial + NADH + H(+). Iridoid synthase that catalyzes the first step in generation of the iridoid ring scaffold using the linear monoterpene (6E)-8-oxogeranial as substrate. Iridoids comprise a large family of distinctive bicyclic monoterpenes that possess a wide range of pharmacological activities, including anticancer, anti-inflammatory, antifungal and antibacterial activities. This Camptotheca acuminata (Happy tree) protein is (S)-8-oxocitronellyl enol synthase CYC2.